The primary structure comprises 230 residues: Probable nicotinate-nucleotide adenylyltransferase (230 aa).

Belongs to the NadD family.

The catalysed reaction is nicotinate beta-D-ribonucleotide + ATP + H(+) = deamido-NAD(+) + diphosphate. It participates in cofactor biosynthesis; NAD(+) biosynthesis; deamido-NAD(+) from nicotinate D-ribonucleotide: step 1/1. Functionally, catalyzes the reversible adenylation of nicotinate mononucleotide (NaMN) to nicotinic acid adenine dinucleotide (NaAD). This chain is Probable nicotinate-nucleotide adenylyltransferase, found in Pseudomonas putida (strain ATCC 47054 / DSM 6125 / CFBP 8728 / NCIMB 11950 / KT2440).